The chain runs to 487 residues: uncharacterized protein (487 aa).

The segment at 84–125 (DDDENDNENDNENDVENENDVENENDDENENDDDDDENDDDD) is disordered. The stretch at 410-485 (IKEISDKLKC…KLEKNIKKSG (76 aa)) forms a coiled coil.

This sequence belongs to the mimivirus L5 family.

This is an uncharacterized protein from Acanthamoeba polyphaga (Amoeba).